The primary structure comprises 62 residues: Large ribosomal subunit protein bL33 (62 aa).

The protein belongs to the bacterial ribosomal protein bL33 family.

This Bacteroides fragilis (strain ATCC 25285 / DSM 2151 / CCUG 4856 / JCM 11019 / LMG 10263 / NCTC 9343 / Onslow / VPI 2553 / EN-2) protein is Large ribosomal subunit protein bL33.